Consider the following 96-residue polypeptide: MNIRPLHDRIVVRRIEEETKTAGGILLPGSAQEKPSQGEVLATGNGQIRDNGETRALDVKTGDKVLFGQYAGQTVKVDGEELLIMKESDVLGVLEG.

Residues 26–48 (LLPGSAQEKPSQGEVLATGNGQI) are disordered.

The protein belongs to the GroES chaperonin family. Heptamer of 7 subunits arranged in a ring. Interacts with the chaperonin GroEL.

The protein resides in the cytoplasm. In terms of biological role, together with the chaperonin GroEL, plays an essential role in assisting protein folding. The GroEL-GroES system forms a nano-cage that allows encapsulation of the non-native substrate proteins and provides a physical environment optimized to promote and accelerate protein folding. GroES binds to the apical surface of the GroEL ring, thereby capping the opening of the GroEL channel. This is Co-chaperonin GroES from Psychrobacter arcticus (strain DSM 17307 / VKM B-2377 / 273-4).